A 224-amino-acid chain; its full sequence is Germin-like protein 8-5 (224 aa).

The signal sequence occupies residues 1 to 22 (MASPSSLCLLAALALISWQAMA). The cysteines at positions 32 and 47 are disulfide-linked. The Cupin type-1 domain occupies 62-212 (AKLDTPRKTN…AFQVEKGTID (151 aa)). N76 carries an N-linked (GlcNAc...) asparagine glycan. Mn(2+) is bound by residues H109, H111, and E116. The N-linked (GlcNAc...) asparagine glycan is linked to N135. A Mn(2+)-binding site is contributed by H157.

It belongs to the germin family. Oligomer (believed to be a pentamer but probably hexamer).

It localises to the secreted. It is found in the extracellular space. Its subcellular location is the apoplast. Its function is as follows. Plays a role in broad-spectrum disease resistance. Probably has no oxalate oxidase activity even if the active site is conserved. This is Germin-like protein 8-5 from Oryza sativa subsp. japonica (Rice).